Reading from the N-terminus, the 304-residue chain is Putative ankyrin repeat protein R598 (304 aa).

7 ANK repeats span residues Asn-7–Leu-36, Tyr-77–Phe-107, Gly-122–Ala-151, His-152–Arg-181, Ala-183–Met-209, Asn-210–Lys-239, and Phe-265–Ile-293.

The polypeptide is Putative ankyrin repeat protein R598 (Acanthamoeba polyphaga (Amoeba)).